The primary structure comprises 520 residues: Glucose-6-phosphate isomerase (520 aa).

Residue E327 is the Proton donor of the active site. Catalysis depends on residues H358 and K486.

This sequence belongs to the GPI family.

It is found in the cytoplasm. It catalyses the reaction alpha-D-glucose 6-phosphate = beta-D-fructose 6-phosphate. It functions in the pathway carbohydrate biosynthesis; gluconeogenesis. The protein operates within carbohydrate degradation; glycolysis; D-glyceraldehyde 3-phosphate and glycerone phosphate from D-glucose: step 2/4. Its function is as follows. Catalyzes the reversible isomerization of glucose-6-phosphate to fructose-6-phosphate. This Bordetella avium (strain 197N) protein is Glucose-6-phosphate isomerase.